The following is a 985-amino-acid chain: Alanine--tRNA ligase, mitochondrial (985 aa).

The transit peptide at 1–23 (MAASVAAAAGRLRRAIGRSCPWQ) directs the protein to the mitochondrion. ATP-binding positions include arginine 105, histidine 123, tryptophan 205, and 235–237 (LWN). Residues asparagine 237 and aspartate 260 each contribute to the L-alanine site. Glycine 264 lines the ATP pocket. Zn(2+) is bound by residues histidine 632, histidine 636, cysteine 749, and histidine 753.

Belongs to the class-II aminoacyl-tRNA synthetase family. Monomer. Requires Zn(2+) as cofactor.

The protein resides in the mitochondrion. It catalyses the reaction tRNA(Ala) + L-alanine + ATP = L-alanyl-tRNA(Ala) + AMP + diphosphate. The enzyme catalyses (S)-lactate + ATP + H(+) = (S)-lactoyl-AMP + diphosphate. It carries out the reaction (S)-lactoyl-AMP + L-lysyl-[protein] = N(6)-[(S)-lactoyl]-L-lysyl-[protein] + AMP + 2 H(+). Catalyzes the attachment of alanine to tRNA(Ala) in a two-step reaction: alanine is first activated by ATP to form Ala-AMP and then transferred to the acceptor end of tRNA(Ala). Also edits incorrectly charged tRNA(Ala) via its editing domain. In presence of high levels of lactate, also acts as a protein lactyltransferase that mediates lactylation of lysine residues in target proteins, such as CGAS. Acts as an inhibitor of cGAS/STING signaling by catalyzing lactylation of CGAS, preventing the formation of liquid-like droplets in which CGAS is activated. The sequence is that of Alanine--tRNA ligase, mitochondrial (Aars2) from Rattus norvegicus (Rat).